The following is a 476-amino-acid chain: Nuclear envelope morphology protein 1 (476 aa).

Residues R47–E74 are disordered. A compositionally biased stretch (low complexity) spans S51–S62. Residues P64–E74 are compositionally biased toward basic and acidic residues. The chain crosses the membrane as a helical span at residues F123–Y139. Disordered stretches follow at residues S164–N190 and G232–D256. Positions A234–D256 are enriched in polar residues. N-linked (GlcNAc...) asparagine glycosylation is found at N237, N257, N284, and N356. The FCP1 homology domain occupies S299–L460.

Belongs to the Dullard family. In terms of assembly, component of the nem1-spo7 complex.

The protein resides in the endoplasmic reticulum membrane. It is found in the nucleus membrane. It catalyses the reaction O-phospho-L-seryl-[protein] + H2O = L-seryl-[protein] + phosphate. The catalysed reaction is O-phospho-L-threonyl-[protein] + H2O = L-threonyl-[protein] + phosphate. Catalytic component of the nem1-spo7 complex which acts as a phosphatase and may be required for proper nuclear membrane morphology. In Schizosaccharomyces pombe (strain 972 / ATCC 24843) (Fission yeast), this protein is Nuclear envelope morphology protein 1 (nem1).